The following is a 148-amino-acid chain: Small ribosomal subunit protein uS9 (148 aa).

The protein belongs to the universal ribosomal protein uS9 family.

The protein is Small ribosomal subunit protein uS9 (RpS16) of Drosophila melanogaster (Fruit fly).